Consider the following 1328-residue polypeptide: 5'-3' exoribonuclease 1 (1328 aa).

The interval 1211–1328 (AGKNRKTNVS…VQPMGKLQIN (118 aa)) is disordered. The span at 1217 to 1231 (TNVSANNVSQGTDSR) shows a compositional bias: polar residues. Residues 1275–1286 (HKSKSKFSKGNH) are compositionally biased toward basic residues.

It belongs to the 5'-3' exonuclease family. As to quaternary structure, monomer. It depends on Mg(2+) as a cofactor.

The protein resides in the cytoplasm. The protein localises to the perinuclear region. It localises to the P-body. With respect to regulation, strand exchange activity is enhanced by fatty acid synthase (stimulatory factor P190/210). Functionally, multifunctional protein that exhibits several independent functions at different levels of the cellular processes. 5'-3' exonuclease component of the nonsense-mediated mRNA decay (NMD) which is a highly conserved mRNA degradation pathway, an RNA surveillance system whose role is to identify and rid cells of mRNA with premature termination codons and thus prevents accumulation of potentially harmful truncated proteins. Involved in the degradation of several hypomodified mature tRNA species and participates in the 5'-processing or the degradation of the snoRNA precursors and rRNA processing. This is 5'-3' exoribonuclease 1 (exo2) from Schizosaccharomyces pombe (strain 972 / ATCC 24843) (Fission yeast).